The primary structure comprises 360 residues: Ankyrin repeat domain-containing protein 2 (360 aa).

The may mediate interaction with PML, p53/TP53 and YBX1 stretch occupies residues 5–120 (PSWAGVGALA…GIQNLIELRK (116 aa)). At S99 the chain carries Phosphoserine; by PKB/AKT2. Residues 126 to 147 (KRDALAASHEPPPEPEEITGPV) form a disordered region. The span at 138–147 (PEPEEITGPV) shows a compositional bias: acidic residues. ANK repeat units lie at residues 147-176 (VDEE…SADT), 180-209 (FRRT…TVDF), 213-242 (LDCT…DTNV), 246-275 (LLST…EINA), and 279-308 (EGDT…DMMT). Positions 330–342 (ALEHPEPGAEHNG) are enriched in basic and acidic residues. Residues 330–360 (ALEHPEPGAEHNGLEGPNDSGRETPQPVPAQ) are disordered.

As to quaternary structure, interacts with ID3; both proteins cooperate in myoblast differentiation. Interacts with TTN/titin. Interacts (via ANK repeats) with TCAP; the interaction is direct. Interacts with TJP1 (via PDZ domains). Interacts with PML; the interaction is direct. Interacts with p53/TP53. Interacts with YBX1. Interacts with AKT2. In terms of processing, phosphorylation at Ser-99 by PKB/AKT2 in response to oxidative stress induces translocation to the nucleus and negatively regulates myoblast differentiation. In terms of tissue distribution, mostly expressed in skeletal and cardiac muscles. Found in slow fibers. Also expressed in kidney, but to a lower extent (at protein level).

It localises to the cytoplasm. Its subcellular location is the myofibril. The protein resides in the sarcomere. It is found in the i band. The protein localises to the cytosol. It localises to the nucleus. Its subcellular location is the PML body. Functions as a negative regulator of myocyte differentiation. May interact with both sarcoplasmic structural proteins and nuclear proteins to regulate gene expression during muscle development and in response to muscle stress. The polypeptide is Ankyrin repeat domain-containing protein 2 (ANKRD2) (Homo sapiens (Human)).